Consider the following 199-residue polypeptide: Recombination protein RecR (199 aa).

Residues 58-73 form a C4-type zinc finger; it reads CQTCRILSETDLCSLC. The 96-residue stretch at 81–176 folds into the Toprim domain; that stretch reads GQLCVVEMPS…TTTRIAHGVP (96 aa).

The protein belongs to the RecR family.

Functionally, may play a role in DNA repair. It seems to be involved in an RecBC-independent recombinational process of DNA repair. It may act with RecF and RecO. This is Recombination protein RecR from Nitrosococcus oceani (strain ATCC 19707 / BCRC 17464 / JCM 30415 / NCIMB 11848 / C-107).